We begin with the raw amino-acid sequence, 614 residues long: Signal recognition particle receptor subunit alpha homolog (614 aa).

The disordered stretch occupies residues 119-244 (EASAKQVKAP…DRSRDSPDDV (126 aa)). Over residues 149 to 160 (QDDKKPVEKRVN) the composition is skewed to basic and acidic residues. Positions 164-178 (APPPSKSQPSSPPTG) are enriched in pro residues. Residues 232-241 (ALLDRSRDSP) show a composition bias toward basic and acidic residues. Phosphoserine occurs at positions 237 and 240. Residue Y246 is modified to Phosphotyrosine. S268, S278, and S279 each carry phosphoserine. A compositionally biased stretch (acidic residues) spans 268–285 (SEDEADNEDASSEGEAEE). The disordered stretch occupies residues 268-290 (SEDEADNEDASSEGEAEEQVQSK). An NG domain region spans residues 396–613 (YTIIFCGVNG…NVNAVVNSLM (218 aa)). GTP is bound by residues 402–409 (GVNGVGKS), 497–501 (DTAGR), and 565–568 (TKFD).

Belongs to the GTP-binding SRP family. As to quaternary structure, heterodimer of SrpRalpha and SrpRbeta. In 8-9 hours embryos, expression is seen in a segmental pattern along embryonic ventral midline.

It localises to the endoplasmic reticulum membrane. Functionally, component of the SRP (signal recognition particle) receptor. Ensures, in conjunction with the signal recognition particle, the correct targeting of the nascent secretory proteins to the endoplasmic reticulum membrane system. Forms a guanosine 5'-triphosphate (GTP)-dependent complex with the SRP subunit Srp54. SRP receptor compaction and GTPase rearrangement drive SRP-mediated cotranslational protein translocation into the ER. May have a role in axonogenesis. The chain is Signal recognition particle receptor subunit alpha homolog from Drosophila melanogaster (Fruit fly).